The following is a 726-amino-acid chain: Putative RNA polymerase II subunit B1 CTD phosphatase RPAP2 homolog (726 aa).

Residues 43–131 (AAASLLSGPD…LPPDRPFGVS (89 aa)) form an RTR1-type zinc finger. Cysteine 66, cysteine 71, cysteine 107, and cysteine 111 together coordinate Zn(2+). Residues 209–218 (VGGPKKEAKQ) are compositionally biased toward basic and acidic residues. Disordered stretches follow at residues 209 to 242 (VGGPKKEAKQNDACSAEQSSNINVDSRNASSGES) and 294 to 323 (KKDKKKNKAAKGTSRVGKSKPAKRPVGRDG). A compositionally biased stretch (polar residues) spans 220–241 (DACSAEQSSNINVDSRNASSGE).

This sequence belongs to the RPAP2 family.

The protein localises to the nucleus. The enzyme catalyses O-phospho-L-seryl-[protein] + H2O = L-seryl-[protein] + phosphate. It catalyses the reaction O-phospho-L-threonyl-[protein] + H2O = L-threonyl-[protein] + phosphate. Putative RNA polymerase II subunit B1 C-terminal domain (CTD) phosphatase involved in RNA polymerase II transcription regulation. The protein is Putative RNA polymerase II subunit B1 CTD phosphatase RPAP2 homolog of Oryza sativa subsp. japonica (Rice).